Reading from the N-terminus, the 326-residue chain is Diphthine methyltransferase (326 aa).

4 WD repeats span residues 65–105, 113–152, 155–195, and 293–326; these read MHCD…ELMF, DSSV…IKNK, EHDY…SCIW, and EHES…WEDI.

It belongs to the DPH7 family.

The protein localises to the cytoplasm. Its subcellular location is the nucleus. The catalysed reaction is diphthine methyl ester-[translation elongation factor 2] + H2O = diphthine-[translation elongation factor 2] + methanol + H(+). It functions in the pathway protein modification; peptidyl-diphthamide biosynthesis. Its function is as follows. Catalyzes the demethylation of diphthine methyl ester to form diphthine, an intermediate in diphthamide biosynthesis, a post-translational modification of histidine which occurs in translation elongation factor 2 (eft201 and eft202). This is Diphthine methyltransferase (rrt2) from Schizosaccharomyces pombe (strain 972 / ATCC 24843) (Fission yeast).